The chain runs to 238 residues: Putative pectate lyase X (238 aa).

Positions 1 to 22 (MKYLLPTAAAGLLLLAAQPAMA) are cleaved as a signal peptide. Residues Asp153, Glu188, and Asp192 each coordinate Ca(2+).

The protein belongs to the polysaccharide lyase 1 family. Requires Ca(2+) as cofactor.

It catalyses the reaction Eliminative cleavage of (1-&gt;4)-alpha-D-galacturonan to give oligosaccharides with 4-deoxy-alpha-D-galact-4-enuronosyl groups at their non-reducing ends.. Its pathway is glycan metabolism; pectin degradation; 2-dehydro-3-deoxy-D-gluconate from pectin: step 2/5. Functionally, involved in maceration and soft-rotting of plant tissue. The polypeptide is Putative pectate lyase X (PEL X) (Pectobacterium carotovorum (Erwinia carotovora)).